The chain runs to 2413 residues: Pre-mRNA-splicing factor 8 (2413 aa).

Composition is skewed to pro residues over residues 1–10 (MSGLPPPPPG) and 19–28 (LPPPPPPPPG). The interval 1–60 (MSGLPPPPPGFEEDSDLALPPPPPPPPGYEIEELDNPMVPSSVNEDTFLPPPPPPPSNFE) is disordered. Residues 253–543 (QHIENIEPLD…LHPTLPTNHN (291 aa)) form an SNU114/CWC21 interacting domain (SCwid) region. The reverse transcriptase homology domain stretch occupies residues 885-1375 (VMVEWLESRS…RIQNRVKLGL (491 aa)). Positions 1376 to 1649 (NSKMPTRFPP…TLKISLIQIF (274 aa)) are linker. The interval 1585-1598 (MQFKKLTHAQRTGL) is important for branch point selection. Residues 1653 to 1824 (LWQKIHESIV…LRERIRKGLQ (172 aa)) are restriction endonuclease homology domain. Residues 1839–2092 (NYAELFNNDI…ILGQNIKAPS (254 aa)) are RNase H homology domain. In terms of domain architecture, MPN spans 2182 to 2311 (VYVLPKNLLK…LSAYNLTDEG (130 aa)).

As to quaternary structure, component of the U4/U6-U5 tri-snRNP complex composed of the U4, U6 and U5 snRNAs and at least PRP3, PRP4, PRP6, PRP8, PRP18, PRP31, PRP38, SNU13, SNU23, SNU66, SNU114, SPP381, SMB1, SMD1, SMD2, SMD3, SMX2, SMX3, LSM2, LSM3, LSM4, LSM5, LSM6, LSM7, LSM8, BRR2 and DIB1. Belongs to the CWC complex (or CEF1-associated complex), a spliceosome sub-complex reminiscent of a late-stage spliceosome composed of the U2, U5 and U6 snRNAs and at least BUD13, BUD31, BRR2, CDC40, CEF1, CLF1, CUS1, CWC2, CWC15, CWC21, CWC22, CWC23, CWC24, CWC25, CWC27, ECM2, HSH155, IST3, ISY1, LEA1, MSL1, NTC20, PRP8, PRP9, PRP11, PRP19, PRP21, PRP22, PRP45, PRP46, SLU7, SMB1, SMD1, SMD2, SMD3, SMX2, SMX3, SNT309, SNU114, SPP2, SYF1, SYF2, RSE1 and YJU2. Interacts with PRP40 and SNP1. Interacts (via SCwid domain) with CWC21. Interacts (via SCwid domain) with SNU114 (via N-terminus). Interacts (via RNase H homology domain and MPN domain) with BRR2; this modulates BRR2 ATPase and helicase activity. Interacts (via RNase H homology domain) with AAR2. AAR2 and BRR2 compete for PRP8 binding, and during U5 snRNP maturation BRR2 displaces the initially bound AAR2. Is associated with snRNP U5, together with SNU114 and BRR2.

It is found in the nucleus. Its function is as follows. Functions as a scaffold that mediates the ordered assembly of spliceosomal proteins and snRNAs. Required for association of BRR2 with the spliceosomal U5 snRNP, and the subsequent assembly of the U4/U6-U5 tri-snRNP complex. Functions as a scaffold that positions spliceosomal U2, U5 and U6 snRNAs at splice sites on pre-mRNA substrates, so that splicing can occur. Interacts with both the 5' and the 3' splice site, as well as the branch region. Has a role in branch site-3' splice site selection. Associates with the branch site-3' splice 3'-exon region. Also has a role in cell cycle. This chain is Pre-mRNA-splicing factor 8 (PRP8), found in Saccharomyces cerevisiae (strain ATCC 204508 / S288c) (Baker's yeast).